Here is a 489-residue protein sequence, read N- to C-terminus: Ammonium transporter Rh type C (489 aa).

Residues 1–21 lie on the Cytoplasmic side of the membrane; sequence MGNCADCLRGFFCPPKNTNIR. Residues 22-42 traverse the membrane as a helical segment; the sequence is ISLPAVCFVWQIAMIVLFGVF. Residues 43–75 lie on the Extracellular side of the membrane; that stretch reads IRYDAESDIRLWLQLKHTNNITSDIENDFYFRY. N-linked (GlcNAc...) asparagine glycosylation occurs at N62. A helical transmembrane segment spans residues 76–96; sequence PSFQDVHVMIFVGFGFLMTFL. The Cytoplasmic segment spans residues 97 to 100; that stretch reads KRYS. The helical transmembrane segment at 101-121 threads the bilayer; the sequence is FGGVGFNFLIGAFGLQWALLM. Topologically, residues 122–140 are extracellular; sequence QGWFHALDPTTGKISIGVE. Residues 141 to 161 form a helical membrane-spanning segment; sequence GLINADFCVAASLIAYGALLG. Residues 162–169 lie on the Cytoplasmic side of the membrane; the sequence is KVSPVQLM. A helical membrane pass occupies residues 170-190; it reads VVTLFGVTLFAVEEYIILNLL. The Extracellular segment spans residues 191-195; that stretch reads HCRDA. Residues 196-216 traverse the membrane as a helical segment; sequence GGSMVIHCFGGYYGLTISWIL. Over 217-235 the chain is Cytoplasmic; the sequence is YRPKLHQSKRLNGSVYHSD. A helical transmembrane segment spans residues 236–256; the sequence is VFAMIGTLFLWMFWPSFNSAI. At 257–266 the chain is on the extracellular side; sequence TDHGSGQHRT. A helical transmembrane segment spans residues 267-287; it reads AINTYIALASSVLTTVAISSA. Residues 288-298 are Cytoplasmic-facing; it reads SEKRGKLDMVH. The helical transmembrane segment at 299-319 threads the bilayer; the sequence is IQNATLAGGVAMGTAAEFMIT. Residue P320 is a topological domain, extracellular. A helical transmembrane segment spans residues 321–341; the sequence is YGALIVGFCTGIISTFGYLFV. The Cytoplasmic segment spans residues 342 to 359; the sequence is SPFMEKYLKIQDTCGVHN. The helical transmembrane segment at 360 to 380 threads the bilayer; that stretch reads LHAMPGMLGGFIGAIVAAAAT. Topologically, residues 381–412 are extracellular; it reads EEVYSREGLIETFDFEGKFADRTVGTQGGFQA. The chain crosses the membrane as a helical span at residues 413–433; sequence AGVCVAIAFAVVGGAVVGLIL. Over 434–489 the chain is Cytoplasmic; it reads RLPIWGDPADDNCFDDEVYWEVPEDEEGILPVLEYNNHMTHKHQDISESNFSVEQS.

Belongs to the ammonium transporter (TC 2.A.49) family. Rh subfamily. In terms of assembly, homotrimer.

It localises to the apical cell membrane. Functionally, functions as an ammonia transporter. May play a role in the elimination of ammonia in the gill. This Gasterosteus aculeatus (Three-spined stickleback) protein is Ammonium transporter Rh type C (rhcg).